We begin with the raw amino-acid sequence, 897 residues long: 4-hydroxyphenylacetate decarboxylase glycyl radical subunit (897 aa).

In terms of domain architecture, PFL spans 35 to 770 (ESTQKLMDIY…VTLATADGRL (736 aa)). 2 residues coordinate 4-hydroxyphenylacetate: Ser-344 and Cys-503. Cys-503 functions as the Cysteine radical intermediate in the catalytic mechanism. Residue Glu-505 is the Proton donor of the active site. 4-hydroxyphenylacetate contacts are provided by His-536 and Glu-637. Positions 778–897 (GSVSAAAGTD…EVIYRTEYDK (120 aa)) constitute a Glycine radical domain. Position 873 is a glycine radical (Gly-873).

It belongs to the glycyl radical enzyme (GRE) family. HPAD subfamily. Heterooctamer consisting of 4 large (HpdB) subunits and 4 small (HpdC) subunits, arranged as a tetramer of heterodimers. Also forms a catalytically inactive homodimer. Post-translationally, requires the activating protein CsdA to generate the key active site glycyl radical that is involved in catalysis. In terms of processing, phosphorylated on serine. Phosphorylation may trigger the formation of the active heterooctamers and thereby regulates enzyme activity.

The enzyme catalyses 4-hydroxyphenylacetate + H(+) = 4-methylphenol + CO2. It carries out the reaction 3,4-dihydroxyphenylacetate + H(+) = 4-methylcatechol + CO2. Glycyl radical subunit of the HPA decarboxylase that decarboxylates phenylacetates with a hydroxyl group in the p-position. Active toward 4-hydroxyphenylacetate and 3,4-dihydroxyphenylacetate, forming 4-methylphenol and 4-methylcatechol, respectively. Is likely involved in the catabolism of aromatic amino acids such as tyrosine fermentation. 4-methylphenol (p-cresol) formation provides metabolic toxicity, which allows an active suppression of other microbes and may provide growth advantages for the producers in highly competitive environments. The large subunit is the catalytic subunit that binds the substrate. The protein is 4-hydroxyphenylacetate decarboxylase glycyl radical subunit of Clostridium scatologenes.